Consider the following 219-residue polypeptide: Elongation factor Ts (219 aa).

Positions 82–85 (TDFV) are involved in Mg(2+) ion dislocation from EF-Tu.

This sequence belongs to the EF-Ts family.

It is found in the cytoplasm. In terms of biological role, associates with the EF-Tu.GDP complex and induces the exchange of GDP to GTP. It remains bound to the aminoacyl-tRNA.EF-Tu.GTP complex up to the GTP hydrolysis stage on the ribosome. The polypeptide is Elongation factor Ts (Gloeobacter violaceus (strain ATCC 29082 / PCC 7421)).